Reading from the N-terminus, the 290-residue chain is 4-hydroxybenzoate octaprenyltransferase (290 aa).

A run of 8 helical transmembrane segments spans residues Leu33–Val53, Leu91–Val111, Trp116–Lys136, Phe138–Phe158, Val165–Thr185, Val212–Pro232, Trp237–Ile257, and Phe269–Leu289.

It belongs to the UbiA prenyltransferase family. The cofactor is Mg(2+).

It localises to the cell inner membrane. It carries out the reaction all-trans-octaprenyl diphosphate + 4-hydroxybenzoate = 4-hydroxy-3-(all-trans-octaprenyl)benzoate + diphosphate. It participates in cofactor biosynthesis; ubiquinone biosynthesis. Its function is as follows. Catalyzes the prenylation of para-hydroxybenzoate (PHB) with an all-trans polyprenyl group. Mediates the second step in the final reaction sequence of ubiquinone-8 (UQ-8) biosynthesis, which is the condensation of the polyisoprenoid side chain with PHB, generating the first membrane-bound Q intermediate 3-octaprenyl-4-hydroxybenzoate. In Acidovorax ebreus (strain TPSY) (Diaphorobacter sp. (strain TPSY)), this protein is 4-hydroxybenzoate octaprenyltransferase.